Here is a 173-residue protein sequence, read N- to C-terminus: 5-hydroxymethyl-dUMP N-hydrolase (173 aa).

Ala-2 carries the post-translational modification N-acetylalanine. 5-hydroxymethyl-dUMP is bound at residue Gly-16. The residue at position 17 (Ser-17) is a Phosphoserine. Residues Ile-18, Arg-19, Gly-20, Ser-87, Gly-89, and Glu-93 each coordinate 5-hydroxymethyl-dUMP. Ser-87 carries the post-translational modification Phosphoserine. 4 positions are modified to phosphoserine: Ser-112, Ser-117, Ser-127, and Ser-158. Ser-117 contacts 5-hydroxymethyl-dUMP.

The protein belongs to the 2'-deoxynucleoside 5'-phosphate N-hydrolase 1 family. As to quaternary structure, monomer and homodimer.

The protein resides in the cytoplasm. It is found in the nucleus. It carries out the reaction 5-hydroxymethyl-dUMP + H2O = 5-hydroxymethyluracil + 2-deoxy-D-ribose 5-phosphate. Its function is as follows. Part of a nucleotide salvage pathway that eliminates epigenetically modified 5-hydroxymethyl-dCMP (hmdCMP) in a two-step process entailing deamination to cytotoxic 5-hydroxymethyl-dUMP (hmdUMP), followed by its hydrolysis into 5-hydroxymethyluracil (hmU) and 2-deoxy-D-ribose 5-phosphate (deoxyribosephosphate). Catalyzes the second step in that pathway, the hydrolysis of the N-glycosidic bond in hmdUMP, degrading this cytotoxic nucleotide to avoid its genomic integration. The protein is 5-hydroxymethyl-dUMP N-hydrolase of Mus musculus (Mouse).